The chain runs to 42 residues: Aryl-alcohol dehydrogenase (42 aa).

This sequence belongs to the zinc-containing alcohol dehydrogenase family. In terms of assembly, homodimer. Requires Zn(2+) as cofactor.

The catalysed reaction is an aromatic primary alcohol + NAD(+) = an aromatic aldehyde + NADH + H(+). In terms of biological role, oxidizes primary alcohols with an aromatic or cyclohex-1-ene ring. It is highly specific for benzyl alcohol. This Acinetobacter guillouiae (Acinetobacter genomosp. 11) protein is Aryl-alcohol dehydrogenase.